A 525-amino-acid chain; its full sequence is Vanin-like protein 2 (525 aa).

The signal sequence occupies residues 1 to 27 (MAKNYWGFFLFCLALGLMLNLSQQASL). N20 and N61 each carry an N-linked (GlcNAc...) asparagine glycan. The CN hydrolase domain occupies 33 to 303 (YTAGVVEFEP…RSIYVARVPK (271 aa)). E72 serves as the catalytic Proton acceptor. N-linked (GlcNAc...) asparagine glycans are attached at residues N99, N116, and N124. K167 acts as the Proton donor in catalysis. N176 is a glycosylation site (N-linked (GlcNAc...) asparagine). C199 acts as the Nucleophile in catalysis. N-linked (GlcNAc...) asparagine glycans are attached at residues N333, N348, and N375.

Belongs to the carbon-nitrogen hydrolase superfamily. BTD/VNN family. In terms of tissue distribution, expressed in third instar larvae.

Its subcellular location is the secreted. In Drosophila melanogaster (Fruit fly), this protein is Vanin-like protein 2.